The sequence spans 569 residues: Beta-lactamase-like protein 4 (569 aa).

The signal sequence occupies residues 1 to 19 (MKYYLYLFLLFTFANLLYS). Residues asparagine 87, asparagine 172, asparagine 239, asparagine 240, asparagine 250, asparagine 299, asparagine 343, asparagine 412, asparagine 419, asparagine 436, asparagine 468, asparagine 509, and asparagine 535 are each glycosylated (N-linked (GlcNAc...) asparagine).

The protein belongs to the beta-lactamase family.

It is found in the secreted. This is Beta-lactamase-like protein 4 from Dictyostelium discoideum (Social amoeba).